We begin with the raw amino-acid sequence, 369 residues long: tRNA/tmRNA (uracil-C(5))-methyltransferase (369 aa).

Positions 193, 221, 226, 242, and 302 each coordinate S-adenosyl-L-methionine. Residue C327 is the Nucleophile of the active site. E361 serves as the catalytic Proton acceptor.

The protein belongs to the class I-like SAM-binding methyltransferase superfamily. RNA M5U methyltransferase family. TrmA subfamily.

It catalyses the reaction uridine(54) in tRNA + S-adenosyl-L-methionine = 5-methyluridine(54) in tRNA + S-adenosyl-L-homocysteine + H(+). The enzyme catalyses uridine(341) in tmRNA + S-adenosyl-L-methionine = 5-methyluridine(341) in tmRNA + S-adenosyl-L-homocysteine + H(+). In terms of biological role, dual-specificity methyltransferase that catalyzes the formation of 5-methyluridine at position 54 (m5U54) in all tRNAs, and that of position 341 (m5U341) in tmRNA (transfer-mRNA). The polypeptide is tRNA/tmRNA (uracil-C(5))-methyltransferase (Sulfurimonas denitrificans (strain ATCC 33889 / DSM 1251) (Thiomicrospira denitrificans (strain ATCC 33889 / DSM 1251))).